The following is a 624-amino-acid chain: Na(+)/H(+) antiporter NhaA (624 aa).

A unknown region spans residues 1–164 (MNPELPPNHL…TFFINGRRYD (164 aa)). Residues 165–624 (GPWDVRSLSE…NAQAEEEKNP (460 aa)) form a na(+)/H(+) antiporter NhaA region. 11 helical membrane passes run 199 to 219 (GIMLLLATALAVVLSNSALGP), 240 to 260 (LSLRHWINDGLLVIFFLVVGL), 279 to 299 (LPIAAAIGGMAVPALLYLILV), 319 to 339 (GWGVPMATDTAFAIALIAMMG), 348 to 368 (VFLTAAAIVDDIGAIIVVAIF), 371 to 391 (GELHIAYLGSAVAIAGLLALL), 407 to 427 (IVLWVFVYASGIHATLAGIIL), 497 to 517 (FLVLPVFALANAGVVVETSVF), 521 to 541 (IPLMLGTATALVIGKPLGFIT), 565 to 585 (GAGALAGIGFTMSLFIASQAF), and 596 to 616 (IAIFGGSILSAIIGVAILWNA).

The protein belongs to the NhaA Na(+)/H(+) (TC 2.A.33) antiporter family.

It localises to the cell inner membrane. It carries out the reaction Na(+)(in) + 2 H(+)(out) = Na(+)(out) + 2 H(+)(in). In terms of biological role, na(+)/H(+) antiporter that extrudes sodium in exchange for external protons. The chain is Na(+)/H(+) antiporter NhaA from Nitrosospira multiformis (strain ATCC 25196 / NCIMB 11849 / C 71).